The primary structure comprises 161 residues: Nucleotide-binding protein Bcep1808_2648 (161 aa).

Belongs to the YajQ family.

Functionally, nucleotide-binding protein. The chain is Nucleotide-binding protein Bcep1808_2648 from Burkholderia vietnamiensis (strain G4 / LMG 22486) (Burkholderia cepacia (strain R1808)).